The primary structure comprises 1273 residues: DNA-directed RNA polymerase subunit beta (1273 aa).

Belongs to the RNA polymerase beta chain family. As to quaternary structure, the RNAP catalytic core consists of 2 alpha, 1 beta, 1 beta' and 1 omega subunit. When a sigma factor is associated with the core the holoenzyme is formed, which can initiate transcription.

The enzyme catalyses RNA(n) + a ribonucleoside 5'-triphosphate = RNA(n+1) + diphosphate. DNA-dependent RNA polymerase catalyzes the transcription of DNA into RNA using the four ribonucleoside triphosphates as substrates. The chain is DNA-directed RNA polymerase subunit beta from Phytoplasma mali (strain AT).